Reading from the N-terminus, the 333-residue chain is Pollen allergen KBG 41 (333 aa).

Positions 1–23 (MAVHQYTVALFLAVALVAGPAAS) are cleaved as a signal peptide. Tandem repeats lie at residues 309–320 (TGAATAAAGGYK) and 321–332 (TGAATPTAGGYK). A 2 X 12 AA tandem repeats region spans residues 309-332 (TGAATAAAGGYKTGAATPTAGGYK).

Belongs to the Poa p IX/Phl p VI allergen family. In terms of tissue distribution, pollen.

This chain is Pollen allergen KBG 41, found in Poa pratensis (Kentucky bluegrass).